The following is a 98-amino-acid chain: Ferredoxin-like protein (98 aa).

The protein to ferredoxins from P.putida and C.tartarivorum, ferredoxin I from A.vinelandii, ferredoxin II from D.desulfuricans.

Its function is as follows. Could be a 3Fe-4S cluster-containing protein. The chain is Ferredoxin-like protein (fixX) from Rhizobium leguminosarum.